The primary structure comprises 292 residues: MSMPATSTKTTKLATSLIDEYALLGWRAMLTEVNLSPKPGLVDRINCGAHKDMALEDFHRSALAIQGWLPRFIEFGACSAEIAPEAVLHGLRPIGMACEGDMFRATAGVNTHKGSIFSLGLLCAAIGRLLQLNQPVTPTTVCSTAASFCRGLTDRELRTNNSQLTAGQRLYQQLGLTGARGEAEAGYPLVINHALPHYLTLLDQGLDPELALLDTLLLLMAINGDTNVASRGGEGGLRWLQREAQTLLQKGGIRTPADLDYLRQFDRECIERNLSPGGSADLLILTWFLAQI.

The protein belongs to the CitG/MdcB family.

The enzyme catalyses 3'-dephospho-CoA + ATP = 2'-(5''-triphospho-alpha-D-ribosyl)-3'-dephospho-CoA + adenine. The protein is Probable 2-(5''-triphosphoribosyl)-3'-dephosphocoenzyme-A synthase of Shigella sonnei (strain Ss046).